The sequence spans 372 residues: Innexin-16 (372 aa).

The next 4 helical transmembrane spans lie at 31–51 (VVTT…NYVG), 106–126 (VPFL…FWII), 181–201 (LVMK…LNSF), and 263–283 (IFIF…GDFV). Residue Asn-352 is glycosylated (N-linked (GlcNAc...) asparagine).

The protein belongs to the pannexin family.

The protein localises to the cell membrane. Its subcellular location is the cell junction. It is found in the gap junction. Functionally, structural component of the gap junctions. Required for signals downstream of defecation clock. This chain is Innexin-16 (inx-16), found in Caenorhabditis elegans.